The primary structure comprises 59 residues: Large ribosomal subunit protein bL32c (59 aa).

Basic residues predominate over residues 1-19 (MAVPKKRTSKAKKNARKAN). The segment at 1 to 24 (MAVPKKRTSKAKKNARKANWKNQA) is disordered.

This sequence belongs to the bacterial ribosomal protein bL32 family.

The protein resides in the plastid. It is found in the chloroplast. The polypeptide is Large ribosomal subunit protein bL32c (rpl32) (Porphyra purpurea (Red seaweed)).